Reading from the N-terminus, the 1020-residue chain is RNA-binding protein 44 (1020 aa).

Disordered stretches follow at residues 1–23 (MQATAVVETDSDKSYHKNGGHLQ) and 50–70 (DGEGDSLTTDERTNVKENSSV). The segment covering 58–70 (TDERTNVKENSSV) has biased composition (basic and acidic residues). Ser-249, Ser-371, Ser-374, Ser-516, Ser-683, and Ser-690 each carry phosphoserine. The RRM domain occupies 796 to 870 (FLIHVGGLCP…KSVNVRLVKI (75 aa)).

Homodimer. Interacts with TEX14.

It localises to the cytoplasm. In terms of biological role, component of intercellular bridges during meiosis. Intercellular bridges are evolutionarily conserved structures that connect differentiating germ cells. Not required for fertility. The chain is RNA-binding protein 44 (Rbm44) from Rattus norvegicus (Rat).